We begin with the raw amino-acid sequence, 122 residues long: MKLLSGLLLCSLVLGVSSQRWFSFIGEATQGAWDMWRAYSDMREANYINADKYFHARGNYDAAQRGPGGVWAAKVISDAREDLQRLMGHGAEDSMADQAANEWGRSGKDPNHFRPKGLPDKY.

An N-terminal signal peptide occupies residues 1 to 19 (MKLLSGLLLCSLVLGVSSQ). The tract at residues 20 to 45 (RWFSFIGEATQGAWDMWRAYSDMREA) is important for amyloid formation. The tract at residues 87–122 (MGHGAEDSMADQAANEWGRSGKDPNHFRPKGLPDKY) is disordered. Basic and acidic residues predominate over residues 105–122 (RSGKDPNHFRPKGLPDKY).

Belongs to the SAA family. As to quaternary structure, homohexamer; dimer of trimers. Can form amyloid fibrils after partial proteolysis; the native, undenatured protein does not form amyloid fibrils (in vitro). Apolipoprotein of the HDL complex. Binds to heparin. In terms of tissue distribution, detected in liver.

The protein localises to the secreted. Its function is as follows. Major acute phase protein. This chain is Serum amyloid A-1 protein (SAA1), found in Oryctolagus cuniculus (Rabbit).